Consider the following 434-residue polypeptide: Trigger factor (434 aa).

The PPIase FKBP-type domain occupies 161-246; sequence EDRVVIDFTG…VKQVQAPVLP (86 aa).

Belongs to the FKBP-type PPIase family. Tig subfamily.

The protein resides in the cytoplasm. The enzyme catalyses [protein]-peptidylproline (omega=180) = [protein]-peptidylproline (omega=0). In terms of biological role, involved in protein export. Acts as a chaperone by maintaining the newly synthesized protein in an open conformation. Functions as a peptidyl-prolyl cis-trans isomerase. This chain is Trigger factor, found in Dechloromonas aromatica (strain RCB).